A 396-amino-acid polypeptide reads, in one-letter code: Acetyl-CoA acetyltransferase (396 aa).

The Acyl-thioester intermediate role is filled by cysteine 88. Residues histidine 352 and cysteine 382 each act as proton acceptor in the active site.

It belongs to the thiolase-like superfamily. Thiolase family. As to quaternary structure, homotetramer.

It carries out the reaction 2 acetyl-CoA = acetoacetyl-CoA + CoA. It participates in biopolymer metabolism; poly-(R)-3-hydroxybutanoate biosynthesis. Its function is as follows. When expressed in E.coli with Synechocystis PhaB, PhaC and PhaE confers the ability to synthesize up to 12% (w/w) poly(3-hydroxybutyrate) (PHB) depending on the carbon source. The protein is Acetyl-CoA acetyltransferase of Synechocystis sp. (strain ATCC 27184 / PCC 6803 / Kazusa).